We begin with the raw amino-acid sequence, 116 residues long: Helper of Tim protein 13 (116 aa).

Residues 10 to 94 (TVDDQSRCVH…SNLICPNCRS (85 aa)) form a CHY-type; degenerate zinc finger. Zn(2+) contacts are provided by C17, H19, C40, C43, C68, C71, C89, and C92.

In terms of assembly, interacts with the small Tim proteins TIM8, TIM9, TIM10, TIM12, and TIM13.

The protein localises to the mitochondrion intermembrane space. Its subcellular location is the mitochondrion membrane. Its function is as follows. Required for the assembly or recycling of the small Tim proteins in the mitochondrial intermembrane, thereby participating in the import and insertion of multi-pass transmembrane proteins into the mitochondrial inner membrane. Probably acts by facilitating the formation of disulfide bonds in small Tim proteins. This Saccharomyces cerevisiae (strain ATCC 204508 / S288c) (Baker's yeast) protein is Helper of Tim protein 13 (HOT13).